A 311-amino-acid polypeptide reads, in one-letter code: Ribonuclease 3 (311 aa).

The region spanning 20-145 (YLCFYRILGF…FIGAIYLDQG (126 aa)) is the RNase III domain. Position 62 (Glu62) interacts with Mg(2+). Residue Asp66 is part of the active site. The Mg(2+) site is built by Asn131 and Glu134. Glu134 is a catalytic residue. One can recognise a DRBM domain in the interval 173–242 (NFKSKLIEWS…AQMAIKKVKD (70 aa)). The segment at 250-311 (NEAKSQHSKP…EVEATETEKE (62 aa)) is disordered. Residues 262-288 (VETESVEPELTESETMEPDTLETEAPE) show a composition bias toward acidic residues.

The protein belongs to the ribonuclease III family. Homodimer. Requires Mg(2+) as cofactor.

The protein resides in the cytoplasm. The catalysed reaction is Endonucleolytic cleavage to 5'-phosphomonoester.. Digests double-stranded RNA. Involved in the processing of primary rRNA transcript to yield the immediate precursors to the large and small rRNAs (23S and 16S). Processes some mRNAs, and tRNAs when they are encoded in the rRNA operon. Processes pre-crRNA and tracrRNA of type II CRISPR loci if present in the organism. In Bacteroides thetaiotaomicron (strain ATCC 29148 / DSM 2079 / JCM 5827 / CCUG 10774 / NCTC 10582 / VPI-5482 / E50), this protein is Ribonuclease 3.